Reading from the N-terminus, the 292-residue chain is 33 kDa chaperonin (292 aa).

Intrachain disulfides connect Cys237/Cys239 and Cys270/Cys273.

Belongs to the HSP33 family. Under oxidizing conditions two disulfide bonds are formed involving the reactive cysteines. Under reducing conditions zinc is bound to the reactive cysteines and the protein is inactive.

It localises to the cytoplasm. Redox regulated molecular chaperone. Protects both thermally unfolding and oxidatively damaged proteins from irreversible aggregation. Plays an important role in the bacterial defense system toward oxidative stress. In Lachnoclostridium phytofermentans (strain ATCC 700394 / DSM 18823 / ISDg) (Clostridium phytofermentans), this protein is 33 kDa chaperonin.